Consider the following 189-residue polypeptide: GTPase HRas (189 aa).

The residue at position 1 (Met1) is an N-acetylmethionine. The residue at position 2 (Thr2) is an N-acetylthreonine; in GTPase HRas, N-terminally processed. A GTP-binding site is contributed by 10-17; it reads GAGGVGKS. The Effector region motif lies at 32 to 40; that stretch reads YDPTIEDSY. Residues 57–61 and 116–119 contribute to the GTP site; these read DTAGQ and NKCD. Cys118 is subject to S-nitrosocysteine. The tract at residues 166–185 is hypervariable region; sequence HKLRKLNPPDESGPGCMNCK. 2 S-palmitoyl cysteine lipidation sites follow: Cys181 and Cys184. Residue Cys186 is modified to Cysteine methyl ester. Residue Cys186 is the site of S-farnesyl cysteine attachment. The propeptide at 187–189 is removed in mature form; it reads VIS.

Belongs to the small GTPase superfamily. Ras family. Post-translationally, palmitoylated by the ZDHHC9-GOLGA7 complex. A continuous cycle of de- and re-palmitoylation regulates rapid exchange between plasma membrane and Golgi.

The protein resides in the cell membrane. The protein localises to the golgi apparatus membrane. It catalyses the reaction GTP + H2O = GDP + phosphate + H(+). With respect to regulation, alternates between an inactive form bound to GDP and an active form bound to GTP. Activated by a guanine nucleotide-exchange factor (GEF) and inactivated by a GTPase-activating protein (GAP). In terms of biological role, ras proteins bind GDP/GTP and possess intrinsic GTPase activity. This chain is GTPase HRas (HRAS), found in Gallus gallus (Chicken).